Reading from the N-terminus, the 349-residue chain is Phenylalanine--tRNA ligase alpha subunit (349 aa).

Glutamate 258 lines the Mg(2+) pocket.

It belongs to the class-II aminoacyl-tRNA synthetase family. Phe-tRNA synthetase alpha subunit type 1 subfamily. Tetramer of two alpha and two beta subunits. Mg(2+) is required as a cofactor.

It is found in the cytoplasm. It carries out the reaction tRNA(Phe) + L-phenylalanine + ATP = L-phenylalanyl-tRNA(Phe) + AMP + diphosphate + H(+). This is Phenylalanine--tRNA ligase alpha subunit from Rickettsia conorii (strain ATCC VR-613 / Malish 7).